The following is a 199-amino-acid chain: Ribonuclease HI (199 aa).

The interval 1–68 (MPVVECDIQT…TAVVQPDRGG (68 aa)) is not required for RNase H activity. The RNase H type-1 domain maps to 66–197 (RGGRVHAYFD…ADALANEALD (132 aa)). The segment at 69–199 (RVHAYFDGAS…ALANEALDDA (131 aa)) is as active as intact RNase H. Mg(2+)-binding residues include Asp75, Glu115, Asp139, and Asp189. Residues Asp75, Glu115, Asp139, and Asp189 each coordinate Mn(2+).

It belongs to the RNase H family. The cofactor is Mn(2+). Mg(2+) is required as a cofactor. Requires Co(2+) as cofactor. It depends on Ni(2+) as a cofactor.

It is found in the cytoplasm. It carries out the reaction Endonucleolytic cleavage to 5'-phosphomonoester.. In terms of biological role, nuclease that specifically degrades the RNA of RNA-DNA hybrids; seems to act exonucleolytically on RNA/DNA hybrids. Endonucleolytically removes RNA primers from the Okazaki fragments of lagging strand synthesis on its own. Complements the temperature-sensitive phenotype of an E.coli double rnhA/rnhB (RNase H) disruption mutant. This chain is Ribonuclease HI (rnhA), found in Halobacterium salinarum (strain ATCC 700922 / JCM 11081 / NRC-1) (Halobacterium halobium).